Consider the following 287-residue polypeptide: Protease HtpX (287 aa).

2 helical membrane-spanning segments follow: residues 4-24 (IFLL…VMSI) and 33-53 (GGLL…SLAI). Histidine 139 contacts Zn(2+). Glutamate 140 is an active-site residue. Residue histidine 143 coordinates Zn(2+). Helical transmembrane passes span 154–174 (LIQG…AGII) and 195–215 (AVVF…VAYF). Glutamate 220 serves as a coordination point for Zn(2+).

This sequence belongs to the peptidase M48B family. The cofactor is Zn(2+).

The protein localises to the cell inner membrane. The sequence is that of Protease HtpX from Shewanella pealeana (strain ATCC 700345 / ANG-SQ1).